The primary structure comprises 122 residues: SLLQFREMITKMTGKEPIFFYAFYGCYCGLGGRGKPQDATDRCCFVHDCCYGKVTGCDPKKDIYTYSEENGAFVCGGDDPCKKEICECDKNAAICFRNDLDTYDYKYLLYSPENCQEESEPC.

7 cysteine pairs are disulfide-bonded: C26–C115, C28–C44, C43–C95, C49–C122, C50–C88, C57–C81, and C75–C86. Ca(2+)-binding residues include Y27, G29, and G31. The active site involves H47. D48 provides a ligand contact to Ca(2+). D89 is a catalytic residue.

It belongs to the phospholipase A2 family. Group II subfamily. D49 sub-subfamily. In terms of assembly, monomer. Requires Ca(2+) as cofactor. Expressed by the venom gland.

Its subcellular location is the secreted. It carries out the reaction a 1,2-diacyl-sn-glycero-3-phosphocholine + H2O = a 1-acyl-sn-glycero-3-phosphocholine + a fatty acid + H(+). Its function is as follows. Acidic phospholipase A2 (PLA2) that only causes a mild edema, when subcutaneously injected in the mice foot. PLA2 catalyzes the calcium-dependent hydrolysis of the 2-acyl groups in 3-sn-phosphoglycerides. The chain is Acidic phospholipase A2 BlatPLA2 from Bothriechis lateralis (Side-striped palm pitviper).